A 505-amino-acid polypeptide reads, in one-letter code: MVKLGQLLASVPEVVAAAPWLAQESDRCPALGKIVTGLSTNSHACPPGTLFIGMPGTRVDGGEFWSGALEAGAIAAVVSEKALQKFPPQNGECVIAVPDLVPVCAGLAAAFYQHPAQTLQLVGVTGTNGKTTTSHLIEYFLNQQQRSSALLGTLYTRWPGYQKTATHTTPFATDLQKQLAEALQAGNQYAVMEVSSHALAQGRVLQCGFACAVFTNLTQDHLDFHGTMENYFAAKALLFKESYLQGRAVINQDDPYGQRLIDRLPLDQVYTYSVNDSTADFYTKDLDYQPTGVKGTFVTPQGEFPFLSPLVGQFNLANVLAAIASGLHLGLDPAAMVKDLLDFPGVPGRMEQVQIRPDQDISVMVDYAHTPDSLENALKAARPFIPGRLICIFGCGGDRDRTKRPLMGNIAAQLADLAVVTSDNPRTEDPEQILADVVQGISLDIEPWIIGDRATAIHKAIREAKPGDGVLIAGKGHEDYQILGTEKIHFDDREQAREALILRYS.

Ser42 contacts UDP-N-acetyl-alpha-D-muramoyl-L-alanyl-D-glutamate. ATP is bound at residue 126–132 (GTNGKTT). Residues 168-169 (TT), Ser195, Gln201, and Arg203 contribute to the UDP-N-acetyl-alpha-D-muramoyl-L-alanyl-D-glutamate site. The residue at position 235 (Lys235) is an N6-carboxylysine. Meso-2,6-diaminopimelate contacts are provided by residues Arg399, 423 to 426 (DNPR), Gly474, and Glu478. Residues 423–426 (DNPR) carry the Meso-diaminopimelate recognition motif motif.

The protein belongs to the MurCDEF family. MurE subfamily. It depends on Mg(2+) as a cofactor. In terms of processing, carboxylation is probably crucial for Mg(2+) binding and, consequently, for the gamma-phosphate positioning of ATP.

It is found in the cytoplasm. It carries out the reaction UDP-N-acetyl-alpha-D-muramoyl-L-alanyl-D-glutamate + meso-2,6-diaminopimelate + ATP = UDP-N-acetyl-alpha-D-muramoyl-L-alanyl-gamma-D-glutamyl-meso-2,6-diaminopimelate + ADP + phosphate + H(+). It functions in the pathway cell wall biogenesis; peptidoglycan biosynthesis. In terms of biological role, catalyzes the addition of meso-diaminopimelic acid to the nucleotide precursor UDP-N-acetylmuramoyl-L-alanyl-D-glutamate (UMAG) in the biosynthesis of bacterial cell-wall peptidoglycan. In Synechocystis sp. (strain ATCC 27184 / PCC 6803 / Kazusa), this protein is UDP-N-acetylmuramoyl-L-alanyl-D-glutamate--2,6-diaminopimelate ligase.